Here is a 304-residue protein sequence, read N- to C-terminus: MKTFLVFALIAVVATSAIAQMETSCISGLERPWQQQPLPPQQSFSQQPPFSQQQQQPLPQQPSFSQQQPPFSQQQPILSQQPPFSQQQQPVLPQQSPFSQQQQLVLPPQQQQQQLVQQQIPIVQPSVLQQLNPCKVFLQQQCSPVAMPQRLARSQMWQQSSCHVMQQQCCQQLQQIPEQSRYEAIRAIIYSIILQEQQQGFVQPQQQQPQQSGQGVSQSQQQSQQQLGQCSFQQPQQQLGQQPQQQQQQQVLQGTFLQPHQIAHLEAVTSIALRTLPTMCSVNVPLYSATTSVPFGVGTGVGAY.

Positions 1 to 23 are cleaved as a signal peptide; it reads MKTFLVFALIAVVATSAIAQMET. Residues 32–92 are disordered; it reads PWQQQPLPPQ…PFSQQQQPVL (61 aa). Positions 41–92 are enriched in low complexity; it reads QQSFSQQPPFSQQQQQPLPQQPSFSQQQPPFSQQQPILSQQPPFSQQQQPVL.

It belongs to the gliadin/glutenin family.

Functionally, gliadin is the major seed storage protein in wheat. The chain is Gamma-gliadin B-I from Triticum aestivum (Wheat).